The sequence spans 185 residues: Ribosome-recycling factor (185 aa).

It belongs to the RRF family.

The protein localises to the cytoplasm. Functionally, responsible for the release of ribosomes from messenger RNA at the termination of protein biosynthesis. May increase the efficiency of translation by recycling ribosomes from one round of translation to another. In Mycobacterium leprae (strain Br4923), this protein is Ribosome-recycling factor.